Consider the following 379-residue polypeptide: D-threonine aldolase (379 aa).

An N6-(pyridoxal phosphate)lysine modification is found at Lys59.

Belongs to the DSD1 family. Pyridoxal 5'-phosphate serves as cofactor. Mn(2+) is required as a cofactor. The cofactor is Co(2+). It depends on Ni(2+) as a cofactor. Requires Mg(2+) as cofactor.

It catalyses the reaction D-threonine = acetaldehyde + glycine. It carries out the reaction D-allo-threonine = acetaldehyde + glycine. Inhibited by the carbonyl reagents hydroxylamine, phenylhydrazine and semicarbazide. Inhibited by the chelating agent EDTA. Inhibited by the sulfhydryl reagent p-chloromercuribenzoic acid, and by sodium cyanide. Inhibited by iodoacetate, Ag(2)SO(4), HgCl(2) and CdCl(2). Competitively inhibited by beta-hydroxyaspartate and O-phospho-DL-threonine. Functionally, catalyzes the reversible cleavage of D-threonine or D-allothreonine into glycine and acetaldehyde. Can also cleave D-beta-phenylserine, D-beta-hydroxy-alpha-aminovaleric acid, D-beta-3,4-dihydroxyphenylserine and D-beta-3,4-methylenedioxyphenylserine into glycine and the corresponding aldehyde compounds. Inactive towards D-serine, beta-hydroxyaspartate and O-phospho-DL-threonine. This is D-threonine aldolase from Arthrobacter sp.